Consider the following 190-residue polypeptide: Probable nicotinate-nucleotide adenylyltransferase (190 aa).

It belongs to the NadD family.

The catalysed reaction is nicotinate beta-D-ribonucleotide + ATP + H(+) = deamido-NAD(+) + diphosphate. Its pathway is cofactor biosynthesis; NAD(+) biosynthesis; deamido-NAD(+) from nicotinate D-ribonucleotide: step 1/1. In terms of biological role, catalyzes the reversible adenylation of nicotinate mononucleotide (NaMN) to nicotinic acid adenine dinucleotide (NaAD). The sequence is that of Probable nicotinate-nucleotide adenylyltransferase from Myxococcus xanthus (strain DK1622).